A 337-amino-acid polypeptide reads, in one-letter code: MRAVELLLLLGLASMVHGLCSPTVFYRDCWIRRFPGMLLDLEESQRLGAQFLKYYSENTGQKCGRSCCLRKDVSCNVAVFFHDPVHDNVNCLHVHCPTLESCILEPGASAILYNITAGIDPDLLVFEHTSPIYPNSRSSSEWWDRLRILKAMSVGSEGVYPDVMNRMVPSTEAASTTQQDLGANTGISYSRKSTTDVGLRFTSANVSTATKVNMVSPSTDFTHSPGNKTISPFFGPTDTRVSQVPSRSRLNISKPSVNKTKGSHSRNHSSENEEPWDGAPASAGVWLACVTLGAAVISLCCRVVLGTSRCCGKRQGWSHMGQRSASGCRRNTLKENS.

The signal sequence occupies residues 1 to 18 (MRAVELLLLLGLASMVHG). Residues 19-278 (LCSPTVFYRD…SSENEEPWDG (260 aa)) lie on the Extracellular side of the membrane. Positions 33-113 (RFPGMLLDLE…LEPGASAILY (81 aa)) constitute an MANSC domain. Residues Asn114, Asn227, and Asn251 are each glycosylated (N-linked (GlcNAc...) asparagine). Composition is skewed to polar residues over residues 216–230 (SPST…NKTI) and 239–260 (TRVS…VNKT). Residues 216 to 277 (SPSTDFTHSP…HSSENEEPWD (62 aa)) form a disordered region. A helical membrane pass occupies residues 279-299 (APASAGVWLACVTLGAAVISL). Residues 300 to 337 (CCRVVLGTSRCCGKRQGWSHMGQRSASGCRRNTLKENS) are Cytoplasmic-facing. The interval 314–337 (RQGWSHMGQRSASGCRRNTLKENS) is disordered.

It localises to the membrane. The chain is MANSC domain-containing protein 4 (Mansc4) from Mus musculus (Mouse).